A 221-amino-acid chain; its full sequence is Probable N-acetyl-alpha-D-glucosaminyl L-malate deacetylase 2 (221 aa).

Zn(2+)-binding residues include H11, D14, and H125.

This sequence belongs to the PIGL family. It depends on Zn(2+) as a cofactor.

The enzyme catalyses (S)-malyl N-acetyl-alpha-D-glucosaminide + H2O = (S)-malyl alpha-D-glucosaminide + acetate. Its function is as follows. Involved in bacillithiol (BSH) biosynthesis. Catalyzes the second step of the pathway, the deacetylation of N-acetylglucosaminylmalate (GlcNAc-Mal) to glucosamine malate (GlcN-Mal). The chain is Probable N-acetyl-alpha-D-glucosaminyl L-malate deacetylase 2 from Bacillus subtilis (strain 168).